A 472-amino-acid polypeptide reads, in one-letter code: Carboxypeptidase Q (472 aa).

The first 20 residues, 1 to 20 (MKFLIFAFFGGVHLLSLCSG), serve as a signal peptide directing secretion. Positions 21-44 (KAICKNGISKRTFEEIKEEIASCG) are excised as a propeptide. Residues N61 and N179 are each glycosylated (N-linked (GlcNAc...) asparagine). Residues H290 and D302 each contribute to the Zn(2+) site. E336 serves as the catalytic Nucleophile. E337 contacts Zn(2+). Residues N353 and N356 are each glycosylated (N-linked (GlcNAc...) asparagine). D364 lines the Zn(2+) pocket. An N-linked (GlcNAc...) asparagine glycan is attached at N396. H434 is a binding site for Zn(2+).

It belongs to the peptidase M28 family. Homodimer. The monomeric form is inactive while the homodimer is active. N-glycosylated. The secreted form is modified by hybrid or complex type oligosaccharide chains. In terms of tissue distribution, mainly detected in blood plasma. Abundant in placenta and kidney. Present at low level in muscles, liver and skin fibroblasts. Not detected in brain or white blood cells (at protein level).

The protein localises to the endoplasmic reticulum. It localises to the golgi apparatus. The protein resides in the lysosome. It is found in the secreted. Carboxypeptidase that may play an important role in the hydrolysis of circulating peptides. Catalyzes the hydrolysis of dipeptides with unsubstituted terminals into amino acids. May play a role in the liberation of thyroxine hormone from its thyroglobulin (Tg) precursor. The polypeptide is Carboxypeptidase Q (CPQ) (Homo sapiens (Human)).